Reading from the N-terminus, the 231-residue chain is LexA repressor (231 aa).

A DNA-binding region (H-T-H motif) is located at residues 28 to 48 (IREIGEALDIRSTNGVNDHLK). Residues Ser149 and Lys186 each act as for autocatalytic cleavage activity in the active site.

The protein belongs to the peptidase S24 family. Homodimer.

It catalyses the reaction Hydrolysis of Ala-|-Gly bond in repressor LexA.. In terms of biological role, represses a number of genes involved in the response to DNA damage (SOS response), including recA and lexA. In the presence of single-stranded DNA, RecA interacts with LexA causing an autocatalytic cleavage which disrupts the DNA-binding part of LexA, leading to derepression of the SOS regulon and eventually DNA repair. The chain is LexA repressor from Anaeromyxobacter sp. (strain Fw109-5).